A 283-amino-acid chain; its full sequence is Protein/nucleic acid deglycase HchA (283 aa).

3 residues coordinate Zn(2+): H86, E91, and H123. C185 functions as the Nucleophile in the catalytic mechanism.

It belongs to the peptidase C56 family. HchA subfamily. Homodimer.

Its subcellular location is the cytoplasm. The catalysed reaction is N(omega)-(1-hydroxy-2-oxopropyl)-L-arginyl-[protein] + H2O = lactate + L-arginyl-[protein] + H(+). It carries out the reaction N(6)-(1-hydroxy-2-oxopropyl)-L-lysyl-[protein] + H2O = lactate + L-lysyl-[protein] + H(+). It catalyses the reaction S-(1-hydroxy-2-oxopropyl)-L-cysteinyl-[protein] + H2O = lactate + L-cysteinyl-[protein] + H(+). The enzyme catalyses N(omega)-(1-hydroxy-2-oxoethyl)-L-arginyl-[protein] + H2O = L-arginyl-[protein] + glycolate + H(+). The catalysed reaction is N(6)-(1-hydroxy-2-oxoethyl)-L-lysyl-[protein] + H2O = glycolate + L-lysyl-[protein] + H(+). It carries out the reaction S-(1-hydroxy-2-oxoethyl)-L-cysteinyl-[protein] + H2O = glycolate + L-cysteinyl-[protein] + H(+). It catalyses the reaction N(2)-(1-hydroxy-2-oxopropyl)-dGTP + H2O = lactate + dGTP + H(+). The enzyme catalyses N(2)-(1-hydroxy-2-oxopropyl)-GTP + H2O = lactate + GTP + H(+). The catalysed reaction is N(2)-(1-hydroxy-2-oxopropyl)-GDP + H2O = lactate + GDP + H(+). It carries out the reaction N(2)-(1-hydroxy-2-oxopropyl)-GMP + H2O = lactate + GMP + H(+). It catalyses the reaction N(2)-(1-hydroxy-2-oxoethyl)-dGTP + H2O = dGTP + glycolate + H(+). The enzyme catalyses N(2)-(1-hydroxy-2-oxoethyl)-GTP + H2O = glycolate + GTP + H(+). The catalysed reaction is N(2)-(1-hydroxy-2-oxoethyl)-GDP + H2O = glycolate + GDP + H(+). It carries out the reaction N(2)-(1-hydroxy-2-oxoethyl)-GMP + H2O = glycolate + GMP + H(+). It catalyses the reaction an N(2)-(1-hydroxy-2-oxopropyl)-guanosine in RNA + H2O = a guanosine in RNA + lactate + H(+). The enzyme catalyses an N(2)-(1-hydroxy-2-oxopropyl)-2'-deoxyguanosine in DNA + H2O = a 2'-deoxyguanosine in DNA + lactate + H(+). The catalysed reaction is an N(2)-(1-hydroxy-2-oxoethyl)-guanosine in RNA + H2O = a guanosine in RNA + glycolate + H(+). It carries out the reaction an N(2)-(1-hydroxy-2-oxoethyl)-2'-deoxyguanosine in DNA + H2O = a 2'-deoxyguanosine in DNA + glycolate + H(+). In terms of biological role, protein and nucleotide deglycase that catalyzes the deglycation of the Maillard adducts formed between amino groups of proteins or nucleotides and reactive carbonyl groups of glyoxals. Thus, functions as a protein deglycase that repairs methylglyoxal- and glyoxal-glycated proteins, and releases repaired proteins and lactate or glycolate, respectively. Deglycates cysteine, arginine and lysine residues in proteins, and thus reactivates these proteins by reversing glycation by glyoxals. Acts on early glycation intermediates (hemithioacetals and aminocarbinols), preventing the formation of Schiff bases and advanced glycation endproducts (AGE). Also functions as a nucleotide deglycase able to repair glycated guanine in the free nucleotide pool (GTP, GDP, GMP, dGTP) and in DNA and RNA. Is thus involved in a major nucleotide repair system named guanine glycation repair (GG repair), dedicated to reversing methylglyoxal and glyoxal damage via nucleotide sanitization and direct nucleic acid repair. Plays an important role in protecting cells from carbonyl stress. This chain is Protein/nucleic acid deglycase HchA, found in Escherichia coli O139:H28 (strain E24377A / ETEC).